A 427-amino-acid polypeptide reads, in one-letter code: Trigger factor (427 aa).

The PPIase FKBP-type domain maps to 163-248 (GDTVVIDFVG…VNEVKAKEVP (86 aa)).

This sequence belongs to the FKBP-type PPIase family. Tig subfamily.

The protein resides in the cytoplasm. The enzyme catalyses [protein]-peptidylproline (omega=180) = [protein]-peptidylproline (omega=0). Involved in protein export. Acts as a chaperone by maintaining the newly synthesized protein in an open conformation. Functions as a peptidyl-prolyl cis-trans isomerase. The chain is Trigger factor from Streptococcus thermophilus (strain CNRZ 1066).